We begin with the raw amino-acid sequence, 37 residues long: Large ribosomal subunit protein bL36c (37 aa).

It belongs to the bacterial ribosomal protein bL36 family.

The protein localises to the plastid. The protein resides in the chloroplast. The sequence is that of Large ribosomal subunit protein bL36c from Chloranthus spicatus (Chulantree).